Here is a 572-residue protein sequence, read N- to C-terminus: Formate--tetrahydrofolate ligase (572 aa).

65–72 (TPLGEGKT) is an ATP binding site.

The protein belongs to the formate--tetrahydrofolate ligase family.

It carries out the reaction (6S)-5,6,7,8-tetrahydrofolate + formate + ATP = (6R)-10-formyltetrahydrofolate + ADP + phosphate. The protein operates within one-carbon metabolism; tetrahydrofolate interconversion. The sequence is that of Formate--tetrahydrofolate ligase from Chloroflexus aggregans (strain MD-66 / DSM 9485).